A 421-amino-acid chain; its full sequence is Probable sugar-binding periplasmic protein (421 aa).

The first 27 residues, Met1–Ala27, serve as a signal peptide directing secretion.

Belongs to the bacterial solute-binding protein 1 family.

Its subcellular location is the periplasm. Its function is as follows. Part of a binding-protein-dependent transport system for a sugar. The chain is Probable sugar-binding periplasmic protein from Brucella melitensis biotype 1 (strain ATCC 23456 / CCUG 17765 / NCTC 10094 / 16M).